The sequence spans 438 residues: sn-glycerol-3-phosphate-binding periplasmic protein UgpB (438 aa).

A signal peptide spans 1 to 23 (MISLRHTALGLALSLAFTGQALA). Sn-glycerol 3-phosphate-binding residues include Tyr-65, Glu-89, Ser-144, Ser-270, Gly-307, Tyr-346, and Arg-397.

Belongs to the bacterial solute-binding protein 1 family. As to quaternary structure, the complex is composed of two ATP-binding proteins (UgpC), two transmembrane proteins (UgpA and UgpE) and a solute-binding protein (UgpB).

The protein resides in the periplasm. Its function is as follows. Part of the ABC transporter complex UgpBAEC involved in sn-glycerol-3-phosphate (G3P) import. Binds G3P. The polypeptide is sn-glycerol-3-phosphate-binding periplasmic protein UgpB (ugpB) (Salmonella typhi).